We begin with the raw amino-acid sequence, 478 residues long: FERM domain-containing protein B (478 aa).

Disordered stretches follow at residues 19–39 (ELIP…TITS), 129–196 (EENS…GFLT), and 202–221 (KAQS…TIAS). 2 stretches are compositionally biased toward low complexity: residues 22 to 39 (PTQS…TITS) and 129 to 164 (EENS…ANDG). In terms of domain architecture, FERM spans 48–468 (VLIRIYFIDD…DWSEEWESKE (421 aa)). The segment covering 165–179 (SGSGSGSGSGSGSGS) has biased composition (gly residues). Low complexity-rich tracts occupy residues 180–189 (GTSTPNSPKG) and 204–216 (QSPQ…SSLS).

The chain is FERM domain-containing protein B (frmB) from Dictyostelium discoideum (Social amoeba).